Here is a 124-residue protein sequence, read N- to C-terminus: Fluoride-specific ion channel FluC 1 (124 aa).

4 helical membrane-spanning segments follow: residues methionine 1–aspartate 21, alanine 30–leucine 50, alanine 56–threonine 76, and isoleucine 102–leucine 122. Glycine 73 and threonine 76 together coordinate Na(+).

This sequence belongs to the fluoride channel Fluc/FEX (TC 1.A.43) family.

The protein localises to the cell membrane. The catalysed reaction is fluoride(in) = fluoride(out). With respect to regulation, na(+) is not transported, but it plays an essential structural role and its presence is essential for fluoride channel function. Its function is as follows. Fluoride-specific ion channel. Important for reducing fluoride concentration in the cell, thus reducing its toxicity. The sequence is that of Fluoride-specific ion channel FluC 1 from Streptomyces avermitilis (strain ATCC 31267 / DSM 46492 / JCM 5070 / NBRC 14893 / NCIMB 12804 / NRRL 8165 / MA-4680).